Reading from the N-terminus, the 353-residue chain is E3 ubiquitin-protein ligase TRIM63 (353 aa).

The RING-type zinc-finger motif lies at Cys23 to Arg79. An interaction with TTN region spans residues Arg74–Ala218. The segment at Gly117–Leu159 adopts a B box-type zinc-finger fold. Zn(2+)-binding residues include Cys122, His125, Cys145, and His151. Residues Glu207–Glu269 are a coiled coil. One can recognise a COS domain in the interval Leu267–Gly325. The segment covering Thr326–Ser344 has biased composition (acidic residues). The disordered stretch occupies residues Thr326–Gln353.

As to quaternary structure, homodimer. Homooligomer and heterooligomer. Interacts with SUMO2, titin/TTN and GMEB1. Interacts with TRIM54 and probably with TRIM55 and TNNI3. Forms a ternary complex with RACK1 and PRKCE. Interacts with CKM. Muscle specific. Selectively expressed in heart and skeletal muscle. Also expressed in the iris.

Its subcellular location is the cytoplasm. It localises to the nucleus. The protein resides in the myofibril. The protein localises to the sarcomere. It is found in the m line. Its subcellular location is the z line. The catalysed reaction is S-ubiquitinyl-[E2 ubiquitin-conjugating enzyme]-L-cysteine + [acceptor protein]-L-lysine = [E2 ubiquitin-conjugating enzyme]-L-cysteine + N(6)-ubiquitinyl-[acceptor protein]-L-lysine.. The protein operates within protein modification; protein ubiquitination. In terms of biological role, E3 ubiquitin ligase. Mediates the ubiquitination and subsequent proteasomal degradation of CKM, GMEB1 and HIBADH. Regulates the proteasomal degradation of muscle proteins under amino acid starvation, where muscle protein is catabolized to provide other organs with amino acids. Inhibits de novo skeletal muscle protein synthesis under amino acid starvation. Regulates proteasomal degradation of cardiac troponin I/TNNI3 and probably of other sarcomeric-associated proteins. May play a role in striated muscle atrophy and hypertrophy by regulating an anti-hypertrophic PKC-mediated signaling pathway. May regulate the organization of myofibrils through TTN in muscle cells. The chain is E3 ubiquitin-protein ligase TRIM63 (TRIM63) from Homo sapiens (Human).